The following is a 150-amino-acid chain: Large ribosomal subunit protein uL13 (150 aa).

The protein belongs to the universal ribosomal protein uL13 family. In terms of assembly, part of the 50S ribosomal subunit.

Functionally, this protein is one of the early assembly proteins of the 50S ribosomal subunit, although it is not seen to bind rRNA by itself. It is important during the early stages of 50S assembly. The sequence is that of Large ribosomal subunit protein uL13 from Persephonella marina (strain DSM 14350 / EX-H1).